We begin with the raw amino-acid sequence, 565 residues long: Berberine bridge enzyme-like C-2 (565 aa).

Residues 1 to 17 form the signal peptide; sequence MFPIIILISFSFTFLFA. N-linked (GlcNAc...) asparagine glycans are attached at residues N28 and N40. C32 and C94 are joined by a disulfide. The region spanning 72 to 248 is the FAD-binding PCMH-type domain; sequence YMPKPTVIIL…YAWKIRLLKV (177 aa). H109 is subject to Pros-8alpha-FAD histidine. N-linked (GlcNAc...) asparagine glycans are attached at residues N363 and N502.

Belongs to the oxygen-dependent FAD-linked oxidoreductase family. Requires FAD as cofactor.

It is found in the vacuole. Its pathway is alkaloid biosynthesis; nicotine biosynthesis. Involved in the biosynthesis of pyridine alkaloid natural products, leading mainly to the production of anabasine, anatabine, nicotine and nornicotine, effective deterrents against herbivores with antiparasitic and pesticide properties (neurotoxins); nornicotine serves as the precursor in the synthesis of the carcinogen compound N'-nitrosonornicotine (NNN). Catalyzes a late oxidation step subsequent to the pyridine ring condensation reaction in the biosynthesis of alkaloids. The chain is Berberine bridge enzyme-like C-2 from Nicotiana tabacum (Common tobacco).